Reading from the N-terminus, the 452-residue chain is Phosphoglucosamine mutase (452 aa).

Residue serine 104 is the Phosphoserine intermediate of the active site. Mg(2+)-binding residues include serine 104, aspartate 246, aspartate 248, and aspartate 250. The residue at position 104 (serine 104) is a Phosphoserine.

This sequence belongs to the phosphohexose mutase family. Mg(2+) is required as a cofactor. Post-translationally, activated by phosphorylation.

The catalysed reaction is alpha-D-glucosamine 1-phosphate = D-glucosamine 6-phosphate. Its function is as follows. Catalyzes the conversion of glucosamine-6-phosphate to glucosamine-1-phosphate. The polypeptide is Phosphoglucosamine mutase (Streptomyces avermitilis (strain ATCC 31267 / DSM 46492 / JCM 5070 / NBRC 14893 / NCIMB 12804 / NRRL 8165 / MA-4680)).